The primary structure comprises 236 residues: uncharacterized protein (236 aa).

The 69-residue stretch at 1–69 (MLKYQQIATE…RGSGIFVRKH (69 aa)) folds into the HTH gntR-type domain. The H-T-H motif DNA-binding region spans 29 to 48 (LETLMAQFEVSKSTITKSLE).

This is an uncharacterized protein from Bacillus subtilis (strain 168).